A 420-amino-acid chain; its full sequence is Ammonium transporter Amt2 (420 aa).

A run of 11 helical transmembrane segments spans residues 34–54 (VFFLVVMGVLVFMMQWGFAML), 71–91 (NMVDWLIGCVAWLFIGGILCS), 120–140 (SWFFGLVFCATAATIVSGGVA), 149–169 (VLISLIITGLLYPLFVYLGPW), 180–200 (AGSLVVHGLGGFLALGAIAAL), 220–240 (IPMAVFGAFALAIGWYGFNVG), 250–270 (GLVCATTTMAMAGGGIGALIA), 273–293 (NDVLFTANGIVAGLVAICSGT), 295–315 (VVSPIGGLIIGLIAGLQVPIV), 339–359 (VIGAILTGILGLKIFGGAGGV), and 365–385 (IIGAVFCIIYGTGLGYILAKI).

Belongs to the ammonia transporter channel (TC 1.A.11.2) family. Homotrimer. Interacts and forms a complex with GlnK2.

It is found in the cell membrane. Its function is as follows. Involved in the uptake of ammonium/ammonia (NH(4)(+)/NH(3)). Transport is electrogenic. The chain is Ammonium transporter Amt2 from Methanocaldococcus jannaschii (strain ATCC 43067 / DSM 2661 / JAL-1 / JCM 10045 / NBRC 100440) (Methanococcus jannaschii).